Reading from the N-terminus, the 194-residue chain is Molybdenum cofactor guanylyltransferase (194 aa).

Residues Leu-12–Gly-14, Lys-25, Asn-53, Asp-70, and Asp-100 each bind GTP. Residue Asp-100 coordinates Mg(2+).

Belongs to the MobA family. Monomer. Mg(2+) is required as a cofactor.

It is found in the cytoplasm. The catalysed reaction is Mo-molybdopterin + GTP + H(+) = Mo-molybdopterin guanine dinucleotide + diphosphate. Transfers a GMP moiety from GTP to Mo-molybdopterin (Mo-MPT) cofactor (Moco or molybdenum cofactor) to form Mo-molybdopterin guanine dinucleotide (Mo-MGD) cofactor. In Photobacterium profundum (strain SS9), this protein is Molybdenum cofactor guanylyltransferase.